The chain runs to 161 residues: MTVLEIDLLDETNNLPDEDKQLVENILQFAAGYLKIEEGTELSLTFTTNEGIQEINREYRNKDQATDVISFALEEMGDGETEIDWGDFDLETPRMLGDIIISTEKAEEQAKDYGHTKARELGFLAVHGLLHLLGYDHMEPDEEKVMFGLQKEVLDAYGLER.

Zn(2+) contacts are provided by histidine 127, histidine 131, and histidine 137.

The protein belongs to the endoribonuclease YbeY family. Zn(2+) serves as cofactor.

The protein resides in the cytoplasm. Functionally, single strand-specific metallo-endoribonuclease involved in late-stage 70S ribosome quality control and in maturation of the 3' terminus of the 16S rRNA. The polypeptide is Endoribonuclease YbeY (Listeria innocua serovar 6a (strain ATCC BAA-680 / CLIP 11262)).